We begin with the raw amino-acid sequence, 548 residues long: mRNA cleavage and polyadenylation factor CLP1 (548 aa).

ATP-binding positions include E19, K60, and 123–128 (SSGKTT). Residues 437–478 (ESEVKEEVKEEKNEKDGEIKQDGEGEKKGEGKGEGEGEGEGK) show a composition bias toward basic and acidic residues. Positions 437 to 500 (ESEVKEEVKE…DEEEVPFREE (64 aa)) are disordered. Over residues 479 to 494 (DGEEEGEAEGEDDEEE) the composition is skewed to acidic residues.

Belongs to the Clp1 family. Clp1 subfamily. In terms of assembly, component of a pre-mRNA cleavage factor complex. Interacts directly with PCF11.

The protein resides in the nucleus. Functionally, required for endonucleolytic cleavage during polyadenylation-dependent pre-mRNA 3'-end formation. The chain is mRNA cleavage and polyadenylation factor CLP1 from Cryptococcus neoformans var. neoformans serotype D (strain JEC21 / ATCC MYA-565) (Filobasidiella neoformans).